We begin with the raw amino-acid sequence, 30 residues long: Matrix Gla protein (30 aa).

Phosphoserine is present on residues Ser-2, Ser-3, and Ser-5.

The protein belongs to the osteocalcin/matrix Gla protein family. Requires vitamin K-dependent gamma-carboxylation for its function.

Its subcellular location is the secreted. Associates with the organic matrix of calcified cartilage. In Prionace glauca (Blue shark), this protein is Matrix Gla protein (mgp).